The primary structure comprises 2103 residues: Zinc finger SWIM domain-containing protein 8 homolog (2103 aa).

Residues 191–227 (FNVAVTFDRRRISSCNCTCTSSAYWCSHVVAVCLHRI) form an SWIM-type zinc finger. 6 disordered regions span residues 684 to 860 (DGNR…GSTA), 1237 to 1262 (SSNP…GGSG), 1310 to 1399 (SSGS…IPNQ), 1735 to 1772 (MQMF…QVVQ), 1786 to 1864 (QQVQ…GVGV), and 1888 to 1916 (PFMQ…RQPH). Over residues 724-740 (SALTESDSQSSFDAVSH) the composition is skewed to polar residues. 2 stretches are compositionally biased toward low complexity: residues 754–789 (AVGV…STSS) and 835–857 (GRVA…VGSG). Positions 1237-1249 (SSNPPVRTRSNQP) are enriched in polar residues. Low complexity predominate over residues 1320 to 1351 (GMVPTTNAAGTTGTPSSSSTTVSGSQNPNGNP). The segment covering 1352-1377 (SGSGGGGNGGGGNGGGGGGGGGGGGS) has biased composition (gly residues). Residues 1755 to 1764 (QPPPQQPPNP) show a composition bias toward pro residues. 2 stretches are compositionally biased toward low complexity: residues 1786-1813 (QQVQ…SGFQ) and 1820-1835 (AFQA…MQAG). Pro residues-rich tracts occupy residues 1836–1859 (PPGP…PNGP) and 1894–1908 (PPQP…PSQP).

It belongs to the ZSWIM8 family. In terms of assembly, component of the SCF-like E3 ubiquitin-protein ligase complex.

It participates in protein modification; protein ubiquitination. Substrate recognition component of a SCF-like E3 ubiquitin-protein ligase complex that promotes target-directed microRNA degradation (TDMD), a process that mediates degradation of microRNAs (miRNAs). The SCF-like E3 ubiquitin-protein ligase complex acts by catalyzing ubiquitination and subsequent degradation of AGO1, thereby exposing miRNAs for degradation. This is Zinc finger SWIM domain-containing protein 8 homolog from Drosophila melanogaster (Fruit fly).